Here is a 430-residue protein sequence, read N- to C-terminus: uncharacterized protein (430 aa).

Helical transmembrane passes span 36–56, 69–89, 100–122, 126–148, 160–180, 197–217, 253–273, 285–305, 317–337, 340–360, 384–404, and 406–426; these read LFVV…GVTV, AFAG…ALIV, TGLS…AAII, FLLF…ARYA, TAVS…PSLV, GPFI…FIML, IIVG…IMTM, LGAV…PSLV, AMAI…AFAP, SMIL…FGLI, VLIA…VAGS, and YLAL…VVVW.

This sequence belongs to the major facilitator superfamily.

Its subcellular location is the cell membrane. This is an uncharacterized protein from Bacillus subtilis (strain 168).